The sequence spans 829 residues: Transmembrane protease serine 7 (829 aa).

At 1-62 the chain is on the cytoplasmic side; that stretch reads MDKEKSDPSC…RAPFWNVQNK (62 aa). A disordered region spans residues 26-52; sequence SVPGKLPGRRPPRKPIGKPRPRKQPKK. Residues 32-52 are compositionally biased toward basic residues; the sequence is PGRRPPRKPIGKPRPRKQPKK. A helical; Signal-anchor for type II membrane protein membrane pass occupies residues 63–83; sequence IILFTVFLFILAVTAWTLLWL. Residues 84–829 lie on the Extracellular side of the membrane; sequence YISKTESKDA…WIHKYVPSLL (746 aa). In terms of domain architecture, SEA spans 92 to 220; sequence DAFYFVGMFR…DSVVLNAGLR (129 aa). Cystine bridges form between C233–C259, C285–C308, and C351–C382. CUB domains follow at residues 233 to 346 and 351 to 467; these read CSRY…FEVI and CEST…YNIS. N-linked (GlcNAc...) asparagine glycosylation is found at N401 and N465. LDL-receptor class A domains are found at residues 469 to 505, 503 to 540, and 544 to 581; these read PCPA…LFCV, FCVT…QNCT, and PCTS…EGCG. Disulfide bonds link C470-C482, C477-C495, C489-C504, C511-C530, C524-C539, C545-C557, C552-C571, C565-C580, and C617-C633. One can recognise a Peptidase S1 domain in the interval 592 to 826; it reads IVGGSDSQEG…FVPWIHKYVP (235 aa). Active-site charge relay system residues include H632 and D680. Disulfide bonds link C716/C782, C748/C761, and C772/C802. The active-site Charge relay system is the S776.

Belongs to the peptidase S1 family. Forms a heterodimer with SERPINA5. Post-translationally, N-glycosylated. In terms of tissue distribution, expressed in brain, eye, testis, skin, epididymis and salivary gland with lower levels in heart, skeletal muscle, thymus, ovary, prostate and uterus.

It localises to the cell membrane. Its function is as follows. Serine protease which preferentially hydrolyzes peptides with Arg at the P1 position. The polypeptide is Transmembrane protease serine 7 (Tmprss7) (Mus musculus (Mouse)).